The following is a 147-amino-acid chain: MTADKYTVAINENALKILGEIVFLMGASQNFAKYPVSFIINYLLPSIYLNQYRIYRTVKDNKPIGFACWAFINDQVEKELIENDINLSVEERNSGENIYVLYFIAPFGHAKQIVHDLKNNIFPNKIVKGLRLDKDGKKVLRVATYYC.

This sequence belongs to the RTX toxin acyltransferase family.

This is an uncharacterized protein from Synechocystis sp. (strain ATCC 27184 / PCC 6803 / Kazusa).